A 177-amino-acid chain; its full sequence is CDP-diacylglycerol--serine O-phosphatidyltransferase (177 aa).

The next 5 helical transmembrane spans lie at Ile-4–Leu-24, Ile-28–Ala-48, Met-77–Thr-97, Leu-116–Phe-136, and Pro-140–Phe-160.

This sequence belongs to the CDP-alcohol phosphatidyltransferase class-I family.

The protein localises to the cell membrane. It catalyses the reaction a CDP-1,2-diacyl-sn-glycerol + L-serine = a 1,2-diacyl-sn-glycero-3-phospho-L-serine + CMP + H(+). This Bacillus subtilis (strain 168) protein is CDP-diacylglycerol--serine O-phosphatidyltransferase (pssA).